The primary structure comprises 399 residues: Phosphoglycerate kinase (399 aa).

Substrate is bound by residues 22–24, arginine 37, 60–63, arginine 119, and arginine 152; these read DLN and HFGR. Residues lysine 202, glutamate 324, and 354–357 contribute to the ATP site; that span reads GGDT.

This sequence belongs to the phosphoglycerate kinase family. In terms of assembly, monomer.

It localises to the cytoplasm. The enzyme catalyses (2R)-3-phosphoglycerate + ATP = (2R)-3-phospho-glyceroyl phosphate + ADP. It functions in the pathway carbohydrate degradation; glycolysis; pyruvate from D-glyceraldehyde 3-phosphate: step 2/5. The chain is Phosphoglycerate kinase from Sinorhizobium fredii (strain NBRC 101917 / NGR234).